The following is a 64-amino-acid chain: MDARLLEILVCPICKGPLHYDRAAQELICNADKLAYPIRDGIPVMLVDEARQTVEGTPVDPAGR.

The protein belongs to the UPF0434 family.

The protein is UPF0434 protein Bcep18194_A5877 of Burkholderia lata (strain ATCC 17760 / DSM 23089 / LMG 22485 / NCIMB 9086 / R18194 / 383).